The following is a 281-amino-acid chain: NADPH-dependent 7-cyano-7-deazaguanine reductase (281 aa).

Position 87 to 89 (87 to 89 (VES)) interacts with substrate. 89–90 (SK) contacts NADPH. Cysteine 188 serves as the catalytic Thioimide intermediate. Aspartate 195 acts as the Proton donor in catalysis. 227–228 (HE) is a substrate binding site. An NADPH-binding site is contributed by 256–257 (RG).

This sequence belongs to the GTP cyclohydrolase I family. QueF type 2 subfamily. As to quaternary structure, homodimer.

It is found in the cytoplasm. It catalyses the reaction 7-aminomethyl-7-carbaguanine + 2 NADP(+) = 7-cyano-7-deazaguanine + 2 NADPH + 3 H(+). Its pathway is tRNA modification; tRNA-queuosine biosynthesis. Functionally, catalyzes the NADPH-dependent reduction of 7-cyano-7-deazaguanine (preQ0) to 7-aminomethyl-7-deazaguanine (preQ1). This Aliivibrio fischeri (strain ATCC 700601 / ES114) (Vibrio fischeri) protein is NADPH-dependent 7-cyano-7-deazaguanine reductase.